The sequence spans 213 residues: Na(+)-translocating NADH-quinone reductase subunit D (213 aa).

Helical transmembrane passes span 22–42 (LIAI…TTAL), 43–63 (TMGF…SLLR), 77–97 (IIIS…FFTI), 101–121 (LSVF…AESM), 131–151 (FLDG…ISII), and 183–203 (LGLM…IWIV).

This sequence belongs to the NqrDE/RnfAE family. Composed of six subunits; NqrA, NqrB, NqrC, NqrD, NqrE and NqrF.

It localises to the cell inner membrane. The catalysed reaction is a ubiquinone + n Na(+)(in) + NADH + H(+) = a ubiquinol + n Na(+)(out) + NAD(+). In terms of biological role, NQR complex catalyzes the reduction of ubiquinone-1 to ubiquinol by two successive reactions, coupled with the transport of Na(+) ions from the cytoplasm to the periplasm. NqrA to NqrE are probably involved in the second step, the conversion of ubisemiquinone to ubiquinol. The sequence is that of Na(+)-translocating NADH-quinone reductase subunit D from Chlamydia trachomatis serovar A (strain ATCC VR-571B / DSM 19440 / HAR-13).